The sequence spans 364 residues: DNA replication and repair protein RecF (364 aa).

Residue 30 to 37 (GANGSGKT) coordinates ATP.

Belongs to the RecF family.

Its subcellular location is the cytoplasm. The RecF protein is involved in DNA metabolism; it is required for DNA replication and normal SOS inducibility. RecF binds preferentially to single-stranded, linear DNA. It also seems to bind ATP. The chain is DNA replication and repair protein RecF from Sodalis glossinidius (strain morsitans).